The sequence spans 136 residues: Large ribosomal subunit protein bL20c (136 aa).

It belongs to the bacterial ribosomal protein bL20 family.

Its subcellular location is the plastid. It is found in the chloroplast. Binds directly to 23S ribosomal RNA and is necessary for the in vitro assembly process of the 50S ribosomal subunit. It is not involved in the protein synthesizing functions of that subunit. This chain is Large ribosomal subunit protein bL20c, found in Huperzia lucidula (Shining clubmoss).